We begin with the raw amino-acid sequence, 287 residues long: Cysteine-rich repeat secretory protein 58 (287 aa).

A signal peptide spans Met-1–Ala-20. Topologically, residues Ile-21–Lys-267 are extracellular. 2 consecutive Gnk2-homologous domains span residues Asp-28–Phe-130 and Glu-135–Ser-246. 9 N-linked (GlcNAc...) asparagine glycosylation sites follow: Asn-39, Asn-43, Asn-59, Asn-68, Asn-89, Asn-99, Asn-107, Asn-208, and Asn-245. Residues Leu-268 to Leu-286 traverse the membrane as a helical segment. Val-287 is a topological domain (cytoplasmic).

Belongs to the cysteine-rich repeat secretory protein family.

It is found in the membrane. This Arabidopsis thaliana (Mouse-ear cress) protein is Cysteine-rich repeat secretory protein 58 (CRRSP58).